The primary structure comprises 295 residues: Tyrosine recombinase XerC (295 aa).

The 85-residue stretch at 1–85 (MLTALNRYWD…ALRRFLSFLV (85 aa)) folds into the Core-binding (CB) domain. Residues 106-285 (HLPKNMDGEQ…NFQHLAEVYD (180 aa)) form the Tyr recombinase domain. Residues R145, K169, H237, R240, and H263 contribute to the active site. Catalysis depends on Y272, which acts as the O-(3'-phospho-DNA)-tyrosine intermediate.

It belongs to the 'phage' integrase family. XerC subfamily. In terms of assembly, forms a cyclic heterotetrameric complex composed of two molecules of XerC and two molecules of XerD.

The protein localises to the cytoplasm. Its function is as follows. Site-specific tyrosine recombinase, which acts by catalyzing the cutting and rejoining of the recombining DNA molecules. The XerC-XerD complex is essential to convert dimers of the bacterial chromosome into monomers to permit their segregation at cell division. It also contributes to the segregational stability of plasmids. This is Tyrosine recombinase XerC from Haemophilus influenzae (strain PittEE).